Here is a 504-residue protein sequence, read N- to C-terminus: Peroxisomal catalase (504 aa).

Residues His-63 and Asn-136 contribute to the active site. Tyr-345 provides a ligand contact to heme. Residues Asn-502–Phe-504 carry the Microbody targeting signal motif.

This sequence belongs to the catalase family. The cofactor is heme.

It localises to the peroxisome matrix. The enzyme catalyses 2 H2O2 = O2 + 2 H2O. In terms of biological role, catalyzes the degradation of hydrogen peroxide (H(2)O(2)) generated by peroxisomal oxidases to water and oxygen, thereby protecting cells from the toxic effects of hydrogen peroxide. The protein is Peroxisomal catalase (CTA1) of Candida boidinii (Yeast).